Here is a 296-residue protein sequence, read N- to C-terminus: Phosphatidylserine decarboxylase proenzyme (296 aa).

Active-site charge relay system; for autoendoproteolytic cleavage activity residues include Asp113, His169, and Ser256. The active-site Schiff-base intermediate with substrate; via pyruvic acid; for decarboxylase activity is Ser256. Position 256 is a pyruvic acid (Ser); by autocatalysis (Ser256).

The protein belongs to the phosphatidylserine decarboxylase family. PSD-B subfamily. Prokaryotic type II sub-subfamily. Heterodimer of a large membrane-associated beta subunit and a small pyruvoyl-containing alpha subunit. The cofactor is pyruvate. Post-translationally, is synthesized initially as an inactive proenzyme. Formation of the active enzyme involves a self-maturation process in which the active site pyruvoyl group is generated from an internal serine residue via an autocatalytic post-translational modification. Two non-identical subunits are generated from the proenzyme in this reaction, and the pyruvate is formed at the N-terminus of the alpha chain, which is derived from the carboxyl end of the proenzyme. The autoendoproteolytic cleavage occurs by a canonical serine protease mechanism, in which the side chain hydroxyl group of the serine supplies its oxygen atom to form the C-terminus of the beta chain, while the remainder of the serine residue undergoes an oxidative deamination to produce ammonia and the pyruvoyl prosthetic group on the alpha chain. During this reaction, the Ser that is part of the protease active site of the proenzyme becomes the pyruvoyl prosthetic group, which constitutes an essential element of the active site of the mature decarboxylase.

The protein resides in the cell membrane. The enzyme catalyses a 1,2-diacyl-sn-glycero-3-phospho-L-serine + H(+) = a 1,2-diacyl-sn-glycero-3-phosphoethanolamine + CO2. It participates in phospholipid metabolism; phosphatidylethanolamine biosynthesis; phosphatidylethanolamine from CDP-diacylglycerol: step 2/2. In terms of biological role, catalyzes the formation of phosphatidylethanolamine (PtdEtn) from phosphatidylserine (PtdSer). The protein is Phosphatidylserine decarboxylase proenzyme of Clostridium botulinum (strain Alaska E43 / Type E3).